A 503-amino-acid chain; its full sequence is Na(+)-translocating NADH-quinone reductase subunit B (503 aa).

4 helical membrane passes run 55–75 (MMLV…NSGI), 120–140 (IFLP…VLFA), 161–181 (TLPP…GVVV), and 186–206 (FGGT…FLFF). Residue Thr-248 is modified to FMN phosphoryl threonine. A run of 5 helical transmembrane segments spans residues 361-381 (TSTF…IASW), 387-407 (FGIG…LIAG), 417-437 (FFIP…LVFM), 452-472 (WIYG…NPAY), and 475-495 (GVML…YFAV).

Belongs to the NqrB/RnfD family. In terms of assembly, composed of six subunits; NqrA, NqrB, NqrC, NqrD, NqrE and NqrF. The cofactor is FMN.

Its subcellular location is the cell inner membrane. The enzyme catalyses a ubiquinone + n Na(+)(in) + NADH + H(+) = a ubiquinol + n Na(+)(out) + NAD(+). In terms of biological role, NQR complex catalyzes the reduction of ubiquinone-1 to ubiquinol by two successive reactions, coupled with the transport of Na(+) ions from the cytoplasm to the periplasm. NqrA to NqrE are probably involved in the second step, the conversion of ubisemiquinone to ubiquinol. The sequence is that of Na(+)-translocating NADH-quinone reductase subunit B from Chlamydia abortus (strain DSM 27085 / S26/3) (Chlamydophila abortus).